Reading from the N-terminus, the 435-residue chain is GTPase Obg (435 aa).

The 158-residue stretch at 1 to 158 folds into the Obg domain; the sequence is MFLDTAKVSV…RQLELELKIL (158 aa). One can recognise an OBG-type G domain in the interval 159–336; it reads ADVGLVGFPS…LLEATAELLA (178 aa). Residues 165–172, 190–194, 212–215, 282–285, and 317–319 each bind GTP; these read GFPSVGKS, FTTIV, DLPG, NKMD, and SSL. Mg(2+) is bound by residues S172 and T192. Residues 357-435 form the OCT domain; the sequence is GFAAEEKAFE…IGKFEFEFVD (79 aa).

It belongs to the TRAFAC class OBG-HflX-like GTPase superfamily. OBG GTPase family. Monomer. Mg(2+) is required as a cofactor.

It localises to the cytoplasm. Its function is as follows. An essential GTPase which binds GTP, GDP and possibly (p)ppGpp with moderate affinity, with high nucleotide exchange rates and a fairly low GTP hydrolysis rate. Plays a role in control of the cell cycle, stress response, ribosome biogenesis and in those bacteria that undergo differentiation, in morphogenesis control. The polypeptide is GTPase Obg (Streptococcus equi subsp. zooepidemicus (strain MGCS10565)).